Consider the following 720-residue polypeptide: Connector enhancer of kinase suppressor of ras 1 (720 aa).

The SAM domain maps to 7-70 (WTPGKVATWL…LGGVEQLQAL (64 aa)). The CRIC domain occupies 78-164 (NLQSLTEGLL…QVLHEDGPAA (87 aa)). The PDZ domain occupies 196-285 (KAVLEQVQLD…GLSLVLKKIP (90 aa)). A disordered region spans residues 285-390 (PIPETPPQTP…RKKSKGLATR (106 aa)). Residues 304 to 317 (RSPSLSLAPLSPRA) are compositionally biased toward low complexity. Phosphoserine is present on residues Ser-307 and Ser-314. Positions 348 to 359 (EPLPIPPEPPAI) are enriched in pro residues. Basic residues predominate over residues 379-390 (VGRKKSKGLATR). The PH domain maps to 403–502 (RPDCDGWLLL…WVRHLITCIS (100 aa)). A disordered region spans residues 504-573 (YQSPGRAPPP…TSFGSLTDSS (70 aa)). The span at 518–530 (CYSETEAEDPDDE) shows a compositional bias: acidic residues. Residues 533–546 (SHSASPSPAQAGSP) are compositionally biased toward low complexity. Residues 553–571 (PAATPTQRSPRTSFGSLTD) show a composition bias toward polar residues. A coiled-coil region spans residues 615-646 (QLNERVHRVRALQSTLKAKLQELQVLEEVLGD). A disordered region spans residues 676 to 720 (QAEGSSHILTSDSTEQSPHSLPSDPEEHSHLCPLTSESSLRPPDL). Positions 678-695 (EGSSHILTSDSTEQSPHS) are enriched in polar residues.

The protein belongs to the CNKSR family. As to quaternary structure, interacts with RHO and RALGDS. Post-translationally, phosphorylated on tyrosine.

The protein localises to the cytoplasm. The protein resides in the membrane. May function as an adapter protein or regulator of Ras signaling pathways. The sequence is that of Connector enhancer of kinase suppressor of ras 1 (CNKSR1) from Homo sapiens (Human).